A 346-amino-acid chain; its full sequence is S-adenosylmethionine:tRNA ribosyltransferase-isomerase (346 aa).

This sequence belongs to the QueA family. As to quaternary structure, monomer.

It localises to the cytoplasm. The catalysed reaction is 7-aminomethyl-7-carbaguanosine(34) in tRNA + S-adenosyl-L-methionine = epoxyqueuosine(34) in tRNA + adenine + L-methionine + 2 H(+). Its pathway is tRNA modification; tRNA-queuosine biosynthesis. Transfers and isomerizes the ribose moiety from AdoMet to the 7-aminomethyl group of 7-deazaguanine (preQ1-tRNA) to give epoxyqueuosine (oQ-tRNA). This is S-adenosylmethionine:tRNA ribosyltransferase-isomerase from Cereibacter sphaeroides (strain KD131 / KCTC 12085) (Rhodobacter sphaeroides).